A 185-amino-acid polypeptide reads, in one-letter code: Ribosome-recycling factor (185 aa).

Residues 143–163 (RKDGEAGEDEVARAEKDLDKS) form a disordered region.

This sequence belongs to the RRF family.

The protein localises to the cytoplasm. Responsible for the release of ribosomes from messenger RNA at the termination of protein biosynthesis. May increase the efficiency of translation by recycling ribosomes from one round of translation to another. The sequence is that of Ribosome-recycling factor from Mycobacterium ulcerans (strain Agy99).